The following is a 141-amino-acid chain: Nucleoside diphosphate kinase (141 aa).

6 residues coordinate ATP: Lys11, Phe59, Arg87, Thr93, Arg104, and Asn114. The Pros-phosphohistidine intermediate role is filled by His117.

This sequence belongs to the NDK family. As to quaternary structure, homotetramer. The cofactor is Mg(2+).

The protein localises to the cytoplasm. It carries out the reaction a 2'-deoxyribonucleoside 5'-diphosphate + ATP = a 2'-deoxyribonucleoside 5'-triphosphate + ADP. It catalyses the reaction a ribonucleoside 5'-diphosphate + ATP = a ribonucleoside 5'-triphosphate + ADP. In terms of biological role, major role in the synthesis of nucleoside triphosphates other than ATP. The ATP gamma phosphate is transferred to the NDP beta phosphate via a ping-pong mechanism, using a phosphorylated active-site intermediate. This is Nucleoside diphosphate kinase from Paraburkholderia phymatum (strain DSM 17167 / CIP 108236 / LMG 21445 / STM815) (Burkholderia phymatum).